The chain runs to 486 residues: Glutamate--tRNA ligase (486 aa).

The 'HIGH' region signature appears at P11–G21. 4 residues coordinate Zn(2+): C108, C110, C136, and H138. The 'KMSKS' region motif lies at K253 to R257. K256 is a binding site for ATP.

It belongs to the class-I aminoacyl-tRNA synthetase family. Glutamate--tRNA ligase type 1 subfamily. As to quaternary structure, monomer. It depends on Zn(2+) as a cofactor.

It is found in the cytoplasm. The catalysed reaction is tRNA(Glu) + L-glutamate + ATP = L-glutamyl-tRNA(Glu) + AMP + diphosphate. In terms of biological role, catalyzes the attachment of glutamate to tRNA(Glu) in a two-step reaction: glutamate is first activated by ATP to form Glu-AMP and then transferred to the acceptor end of tRNA(Glu). This Lysinibacillus sphaericus (strain C3-41) protein is Glutamate--tRNA ligase.